The chain runs to 548 residues: T-complex protein 1 subunit alpha (548 aa).

This sequence belongs to the TCP-1 chaperonin family. In terms of assembly, heterooligomeric complex of about 850 to 900 kDa that forms two stacked rings, 12 to 16 nm in diameter.

The protein localises to the cytoplasm. Molecular chaperone; assists the folding of proteins upon ATP hydrolysis. Known to play a role, in vitro, in the folding of actin and tubulin. The polypeptide is T-complex protein 1 subunit alpha (tcp1) (Dictyostelium discoideum (Social amoeba)).